The chain runs to 257 residues: 3-methyl-2-oxobutanoate hydroxymethyltransferase (257 aa).

Asp-42 and Asp-86 together coordinate Mg(2+). Residues 42–43 (DS), Asp-86, and Lys-116 each bind 3-methyl-2-oxobutanoate. Position 118 (Glu-118) interacts with Mg(2+). The active-site Proton acceptor is Glu-185.

The protein belongs to the PanB family. In terms of assembly, homodecamer; pentamer of dimers. Requires Mg(2+) as cofactor.

It is found in the cytoplasm. The enzyme catalyses 3-methyl-2-oxobutanoate + (6R)-5,10-methylene-5,6,7,8-tetrahydrofolate + H2O = 2-dehydropantoate + (6S)-5,6,7,8-tetrahydrofolate. It participates in cofactor biosynthesis; (R)-pantothenate biosynthesis; (R)-pantoate from 3-methyl-2-oxobutanoate: step 1/2. In terms of biological role, catalyzes the reversible reaction in which hydroxymethyl group from 5,10-methylenetetrahydrofolate is transferred onto alpha-ketoisovalerate to form ketopantoate. This chain is 3-methyl-2-oxobutanoate hydroxymethyltransferase, found in Prochlorococcus marinus (strain MIT 9312).